Here is a 276-residue protein sequence, read N- to C-terminus: MAIKKFKPTSPGRRQMTVSTFAEITATEPYKPLVEPLKKTGGRNNQGRLTVRHRGGGHKRLYRVIDFKRDKDGIPGRVATIEYDPNRSANIALINYADGEKRYILAPENLQVGDQVISGPEADIKVGNALPLSQIPVGTMVHNVELKPGKGGQMARSAGAGAQLMAKEGGYALLRLPSGEVRKVQESCRATVGQVGNLDWENINIGKAGRKRWLGIRPTVRGVVMNPVDHPHGGGEGRAPVGRKHPVTPWGKPAMGAKTRKKRKLSDKLIVKPRNK.

Residues 225 to 276 (MNPVDHPHGGGEGRAPVGRKHPVTPWGKPAMGAKTRKKRKLSDKLIVKPRNK) are disordered. A compositionally biased stretch (basic residues) spans 258–276 (KTRKKRKLSDKLIVKPRNK).

It belongs to the universal ribosomal protein uL2 family. In terms of assembly, part of the 50S ribosomal subunit. Forms a bridge to the 30S subunit in the 70S ribosome.

In terms of biological role, one of the primary rRNA binding proteins. Required for association of the 30S and 50S subunits to form the 70S ribosome, for tRNA binding and peptide bond formation. It has been suggested to have peptidyltransferase activity; this is somewhat controversial. Makes several contacts with the 16S rRNA in the 70S ribosome. The chain is Large ribosomal subunit protein uL2 from Moorella thermoacetica (strain ATCC 39073 / JCM 9320).